A 42-amino-acid chain; its full sequence is Conodipine-M beta chain (42 aa).

In terms of assembly, heterodimer of an alpha and a beta chains; probably disulfide-linked. As to expression, expressed by the venom duct.

Its subcellular location is the secreted. Heterodimer: conodipine-M catalyzes the calcium-dependent hydrolysis of the 2-acyl groups in 3-sn-phosphoglycerides. This activity may be supported by the alpha chain. Conodipine-M inhibits the binding of isradipine (a ligand specific for L-type calcium channel) to L-type calcium channels. This is Conodipine-M beta chain from Conus magus (Magical cone).